A 273-amino-acid chain; its full sequence is Dermonecrotic toxin LhSicTox-alphaIA2bii (273 aa).

The active site involves His-5. Residues Glu-25 and Asp-27 each contribute to the Mg(2+) site. The active-site Nucleophile is His-41. 2 cysteine pairs are disulfide-bonded: Cys-45/Cys-51 and Cys-47/Cys-190. Position 85 (Asp-85) interacts with Mg(2+).

This sequence belongs to the arthropod phospholipase D family. Class II subfamily. The cofactor is Mg(2+). Expressed by the venom gland.

Its subcellular location is the secreted. The catalysed reaction is an N-(acyl)-sphingosylphosphocholine = an N-(acyl)-sphingosyl-1,3-cyclic phosphate + choline. It catalyses the reaction an N-(acyl)-sphingosylphosphoethanolamine = an N-(acyl)-sphingosyl-1,3-cyclic phosphate + ethanolamine. It carries out the reaction a 1-acyl-sn-glycero-3-phosphocholine = a 1-acyl-sn-glycero-2,3-cyclic phosphate + choline. The enzyme catalyses a 1-acyl-sn-glycero-3-phosphoethanolamine = a 1-acyl-sn-glycero-2,3-cyclic phosphate + ethanolamine. Dermonecrotic toxins cleave the phosphodiester linkage between the phosphate and headgroup of certain phospholipids (sphingolipid and lysolipid substrates), forming an alcohol (often choline) and a cyclic phosphate. This toxin acts on sphingomyelin (SM). It may also act on ceramide phosphoethanolamine (CPE), lysophosphatidylcholine (LPC) and lysophosphatidylethanolamine (LPE), but not on lysophosphatidylserine (LPS), and lysophosphatidylglycerol (LPG). It acts by transphosphatidylation, releasing exclusively cyclic phosphate products as second products. Induces dermonecrosis, hemolysis, increased vascular permeability, edema, inflammatory response, and platelet aggregation. The chain is Dermonecrotic toxin LhSicTox-alphaIA2bii from Loxosceles hirsuta (Recluse spider).